Reading from the N-terminus, the 356-residue chain is Tetraacyldisaccharide 4'-kinase (356 aa).

Gly-51–Thr-58 is a binding site for ATP.

The protein belongs to the LpxK family.

It catalyses the reaction a lipid A disaccharide + ATP = a lipid IVA + ADP + H(+). The protein operates within glycolipid biosynthesis; lipid IV(A) biosynthesis; lipid IV(A) from (3R)-3-hydroxytetradecanoyl-[acyl-carrier-protein] and UDP-N-acetyl-alpha-D-glucosamine: step 6/6. Transfers the gamma-phosphate of ATP to the 4'-position of a tetraacyldisaccharide 1-phosphate intermediate (termed DS-1-P) to form tetraacyldisaccharide 1,4'-bis-phosphate (lipid IVA). This chain is Tetraacyldisaccharide 4'-kinase, found in Oleidesulfovibrio alaskensis (strain ATCC BAA-1058 / DSM 17464 / G20) (Desulfovibrio alaskensis).